Reading from the N-terminus, the 75-residue chain is Sec-independent protein translocase protein TatA (75 aa).

Residues 1 to 21 (MGISIWQLLIVLGIVILLFGT) form a helical membrane-spanning segment. The tract at residues 41-75 (SMSDEEEKNAEQQPLEKQNAEQQAQAEDKPKEKQG) is disordered. Low complexity predominate over residues 56–65 (EKQNAEQQAQ). Residues 66 to 75 (AEDKPKEKQG) show a composition bias toward basic and acidic residues.

Belongs to the TatA/E family. In terms of assembly, the Tat system comprises two distinct complexes: a TatABC complex, containing multiple copies of TatA, TatB and TatC subunits, and a separate TatA complex, containing only TatA subunits. Substrates initially bind to the TatABC complex, which probably triggers association of the separate TatA complex to form the active translocon.

It localises to the cell inner membrane. Functionally, part of the twin-arginine translocation (Tat) system that transports large folded proteins containing a characteristic twin-arginine motif in their signal peptide across membranes. TatA could form the protein-conducting channel of the Tat system. In Marinobacter nauticus (strain ATCC 700491 / DSM 11845 / VT8) (Marinobacter aquaeolei), this protein is Sec-independent protein translocase protein TatA.